Here is a 1201-residue protein sequence, read N- to C-terminus: Potassium/sodium hyperpolarization-activated cyclic nucleotide-gated channel 4 (1201 aa).

Topologically, residues 1–263 (MDKLPPSMRK…IIHPYSDFRF (263 aa)) are cytoplasmic. Residues 24 to 183 (WIMDEEEDGE…PASASCEQPS (160 aa)) are disordered. A compositionally biased stretch (acidic residues) spans 26-36 (MDEEEDGEEEG). Residues 105 to 118 (SRGGGSGGAGGGSS) are compositionally biased toward gly residues. Residues 121–132 (HLHDSAEERRLI) are compositionally biased toward basic and acidic residues. S139 carries the post-translational modification Phosphoserine. Positions 164–174 (ASPPPQQPPQP) are enriched in pro residues. The involved in subunit assembly stretch occupies residues 209-260 (GQSGFMQRQFGAMLQPGVNKFSLRMFGSQKAVEREQERVKSAGFWIIHPYSD). The chain crosses the membrane as a helical span at residues 264-286 (YWDLTMLLLMVGNLIIIPVGITF). At 287–293 (FKDENTT) the chain is on the extracellular side. Residues 294 to 314 (PWIVFNVVSDTFFLIDLVLNF) form a helical membrane-spanning segment. Over 315 to 336 (RTGIVVEDNTEIILDPQRIKMK) the chain is Cytoplasmic. The helical transmembrane segment at 337 to 359 (YLKSWFVVDFISSIPVDYIFLIV) threads the bilayer. The Extracellular portion of the chain corresponds to 360–378 (ETRIDSEVYKTARALRIVR). The chain crosses the membrane as a helical; Voltage-sensor span at residues 379–399 (FTKILSLLRLLRLSRLIRYIH). Residues 400–413 (QWEEIFHMTYDLAS) are Cytoplasmic-facing. Residues 414–436 (AVVRIVNLIGMMLLLCHWDGCLQ) traverse the membrane as a helical segment. Over 437–464 (FLVPMLQDFPHDCWVSINGMVNNSWGKQ) the chain is Extracellular. N458 carries N-linked (GlcNAc...) asparagine glycosylation. The pore-forming intramembrane region spans 465 to 486 (YSYALFKAMSHMLCIGYGRQAP). Over 487 to 491 (VGMSD) the chain is Extracellular. A helical transmembrane segment spans residues 492–517 (VWLTMLSMIVGATCYAMFIGHATALI). Topologically, residues 518-1201 (QSLDSSRRQY…PVRSKLPSNL (684 aa)) are cytoplasmic. The 3',5'-cyclic GMP site is built by Y559, K562, F564, and E566. Residues G659, E660, C662, R669, T670, V673, and R710 each coordinate 3',5'-cyclic AMP. Disordered regions lie at residues 804–902 (AIFR…TAAA) and 914–1201 (ALGG…PSNL). Composition is skewed to low complexity over residues 831 to 856 (SLIP…SSSS) and 866 to 880 (SAPP…SSSS). Positions 881–894 (SPPPGACGSPPAPT) are enriched in pro residues. Low complexity-rich tracts occupy residues 915-939 (LGGS…SPQA) and 967-995 (RSPS…SSTP). Positions 1029 to 1042 (GHSPGPPRTFPSAP) are enriched in pro residues. Low complexity predominate over residues 1045–1056 (ASGSHGSLLLPP). Residues S1105 and S1108 each carry the phosphoserine modification. Over residues 1122–1134 (AGGGSGSSGGLGP) the composition is skewed to gly residues.

This sequence belongs to the potassium channel HCN family. Homotetramer. The potassium channel is composed of a homo- or heterotetrameric complex of pore-forming subunits. Interacts with PEX5L with a 4:4 HCN4:PEX5L stoichiometry; reduces the effects of cAMP on the voltage-dependence and rate of activation. Interacts with IRAG1; regulates HCN4 channel activity. Interacts with IRAG2; regulates HCN4 channel activity. S-palmitoylated. In terms of tissue distribution, detected in a subset of elongated cells in taste buds.

It localises to the cell membrane. The catalysed reaction is K(+)(in) = K(+)(out). It catalyses the reaction Na(+)(in) = Na(+)(out). Its activity is regulated as follows. Activated by cAMP, and to a lesser extent by cGMP and cCMP. cAMP binding causes a conformation change that leads to the assembly of an active tetramer and channel opening. Binding of cAMP removes a tonic inhibition conferred by cyclic nucleotide-binding domain (CNBD) on channel opening. Cyclic dinucleotides can modulate HCN4 channel; cyclic dinucleotides acting as potent antagonists of cAMP. Inhibited by extracellular Cs(+) ions. Auxiliary subunits can also regulate HCN4 channel. IRAG1 causes a gain-of-function by shifting HCN4 activation to more depolarized membrane potentials in the absence of cAMP. In contrast, IRAG2 causes a loss-of-function by inhibiting cAMP-dependent potentiation of HCN4 activation. In terms of biological role, hyperpolarization-activated ion channel that are permeable to Na(+) and K(+) ions with very slow activation and inactivation. Exhibits higher selectivity for K(+) over Na(+) ions. Contributes to the native pacemaker currents in heart (If) that regulate the rhythm of heart beat. Contributes to the native pacemaker currents in neurons (Ih). May mediate responses to sour stimuli. In Mus musculus (Mouse), this protein is Potassium/sodium hyperpolarization-activated cyclic nucleotide-gated channel 4 (Hcn4).